The primary structure comprises 265 residues: MNMSVLTLQEYEFEKQFNEHEAIQWMQENWKKSFLFSALYAAFIFGGRHLMNKRAKFELRKPLVLWSLSLAVFSIFGAVRTAPYMLYILMTKGLKQSVCDQSFYIGPVSKFWAYAFVLSKAPELGDTIFIILRKQKLIFLHWYHHITVLLYSWYSYKDMVAGGGWFMTMNYGVHAVMYSYYALRAAGFRVSRKFAMFITLSQITQMLVGCVINYLVFSWMQHGQCHSHVQNIIWSSLMYLSYFVLFCHFFFEAYIGKTTKARKVD.

Residue N2 is glycosylated (N-linked (GlcNAc...) asparagine). The next 7 membrane-spanning stretches (helical) occupy residues 34 to 51 (FLFS…RHLM), 70 to 90 (LAVF…YILM), 111 to 131 (FWAY…IFII), 137 to 156 (LIFL…WYSY), 159 to 179 (MVAG…VMYS), 197 to 217 (FITL…YLVF), and 232 to 252 (IIWS…FFFE).

Belongs to the ELO family. ELOVL6 subfamily. N-Glycosylated.

It localises to the endoplasmic reticulum membrane. The enzyme catalyses a very-long-chain acyl-CoA + malonyl-CoA + H(+) = a very-long-chain 3-oxoacyl-CoA + CO2 + CoA. It carries out the reaction hexadecanoyl-CoA + malonyl-CoA + H(+) = 3-oxooctadecanoyl-CoA + CO2 + CoA. The catalysed reaction is (9Z)-hexadecenoyl-CoA + malonyl-CoA + H(+) = 3-oxo-(11Z)-octadecenoyl-CoA + CO2 + CoA. It catalyses the reaction dodecanoyl-CoA + malonyl-CoA + H(+) = 3-oxotetradecanoyl-CoA + CO2 + CoA. The enzyme catalyses tetradecanoyl-CoA + malonyl-CoA + H(+) = 3-oxohexadecanoyl-CoA + CO2 + CoA. It carries out the reaction (9Z)-octadecenoyl-CoA + malonyl-CoA + H(+) = 3-oxo-(11Z)-eicosenoyl-CoA + CO2 + CoA. The catalysed reaction is (9Z,12Z)-octadecadienoyl-CoA + malonyl-CoA + H(+) = (11Z,14Z)-3-oxoicosa-11,14-dienoyl-CoA + CO2 + CoA. It catalyses the reaction (9Z,12Z,15Z)-octadecatrienoyl-CoA + malonyl-CoA + H(+) = (11Z,14Z,17Z)-3-oxoeicosatrienoyl-CoA + CO2 + CoA. The protein operates within lipid metabolism; fatty acid biosynthesis. The reaction is stimulated by the presence of HSD17B12, the enzyme catalyzing the second step of the elongation cycle. Catalyzes the first and rate-limiting reaction of the four reactions that constitute the long-chain fatty acids elongation cycle. This endoplasmic reticulum-bound enzymatic process allows the addition of 2 carbons to the chain of long- and very long-chain fatty acids (VLCFAs) per cycle. Condensing enzyme that elongates fatty acids with 12, 14 and 16 carbons with higher activity toward C16:0 acyl-CoAs. Catalyzes the synthesis of unsaturated C16 long chain fatty acids and, to a lesser extent, C18:0 and those with low desaturation degree. May participate in the production of saturated and monounsaturated VLCFAs of different chain lengths that are involved in multiple biological processes as precursors of membrane lipids and lipid mediators. This is Very long chain fatty acid elongase 6 from Gallus gallus (Chicken).